A 335-amino-acid chain; its full sequence is Biotin synthase (335 aa).

Residues 51 to 278 (NTVQLSSLLS…LAKVRLSAGR (228 aa)) enclose the Radical SAM core domain. [4Fe-4S] cluster-binding residues include Cys-66, Cys-70, and Cys-73. Residues Cys-110, Cys-141, Cys-201, and Arg-273 each contribute to the [2Fe-2S] cluster site.

Belongs to the radical SAM superfamily. Biotin synthase family. Homodimer. [4Fe-4S] cluster serves as cofactor. Requires [2Fe-2S] cluster as cofactor.

It catalyses the reaction (4R,5S)-dethiobiotin + (sulfur carrier)-SH + 2 reduced [2Fe-2S]-[ferredoxin] + 2 S-adenosyl-L-methionine = (sulfur carrier)-H + biotin + 2 5'-deoxyadenosine + 2 L-methionine + 2 oxidized [2Fe-2S]-[ferredoxin]. It participates in cofactor biosynthesis; biotin biosynthesis; biotin from 7,8-diaminononanoate: step 2/2. Catalyzes the conversion of dethiobiotin (DTB) to biotin by the insertion of a sulfur atom into dethiobiotin via a radical-based mechanism. The protein is Biotin synthase of Bordetella pertussis (strain Tohama I / ATCC BAA-589 / NCTC 13251).